The following is a 1408-amino-acid chain: MMVDQIKLLFYNKMMDRTAIKQLISRLIAQFGITYTTNILDQLKTLGFKQATNASVSLGIDDLLEAPSKAWLIQDAERQGSIFEQHHRFGSVHAVEKLRQLIETWYATSEYLKREMIPNFRIIDPLNPVHMMSFSGARGSTSQVHQLVGMRGLMSDPQGQIIDLPIRSNLREGLSLTEYIISCYGARKGVVDTAVRTSDAGYLTRRLVEVVQHIVVRKMDCGSTRGIPFKMTQDRFKRNLYQQRLIGRVLADNVYLEMRCIAMRNQDIGNELANRLITIQKQLVYVRSPLTRKSISWVCQLCYGWSLTHQNLVELGEAVGIIAGQSIGEPGTQLTLRTFHTGGVFTGDIAEHIRIPFNGIISFAEDSVHPIRTRHGHPAWICQDNLSVSVKNKNRIHNVIIPYQSLILVQNNQYVESKQVIAEVRINQSLPKERVKKHIYSNSEGEMHWSTIVRHSPQHRQSNVYPVLKTGHIWILSGSLCNVIETSSSFYKEQDRFNIQSVFTKPEFLPYSFGRNKGEKNQLTNLHKKGQELNHLKFDSSATIKTYKFPYLTSLFYCKIRKDKTENKVILSIKPIQRRNKYYRKTPYRDFVFQTPTNGILNRGDILAIHENPEYRIHISGVIKYGTLKIDSIVENERIPNDREKTTFGSRYKVLRGGNFFFLPGEIYIVHESSAYILVSNNSIVQAGTQITPTLTSQLGGLVQIKNIQKSFEIRILPGTIHHPKRIPSISKQNNMLIPPGQSVFDNLKFDHWIYLQWITSPRKKTFALARPVIEYFVRKGSYPPILNLLKEQNTLRVKFLDYMLYEDGEEIQIKNNMSIQLVQTCLLLDWEKKSPIKAAKTSILELRINKIIKTFLQISLLNSFDFYVKGSKFKRFFNNKKSFVADSIPKTLESQLSIKHQGTIRSVSNRKTSFLVLSPSDSFQNSLSTNFQYYDSKNRYGKKKELKWNTFFDTKKVSRSLKKNYLSSIKDSEKRSLNSKVGLTSVSSFDHTRQLQGMKILGLLGYLYSIANCFLYPKGIFRNEVFFHRDSSIDDLVGFDKLPNWYFLDENRKIYSFHLRNLIGKRFFYWTRNLSNFNEIPLVNLGQFICEGARLFENQISSQSGQIIALSPEFLIIRLAKLYLATKGATIHNHYGDLLREGDTLITLTYERFKSGDIIQGLPKVEQLLEARSVNAVSRNIEDNFKKCNRVIAKFIESPWSFFFSAKISTEQSRKDLVDQIQGVYQSQGVQISDKHIEIIVRQMTSKVLTLEDGIATVFLPGELIELPRAQRMNRALKQLIYYKPILLGITKASLNTTSFLSEASFQETTRVLARAAIRGRIDWLKGLKENVIIGGIVPTGTGSREVTCQMDLEKHKKGSNLKIKNTHSFSCEIKDLLFNHGKVSLTFKRSNIHRELKKPLSENDSD.

The protein belongs to the RNA polymerase beta' chain family. RpoC2 subfamily. In plastids the minimal PEP RNA polymerase catalytic core is composed of four subunits: alpha, beta, beta', and beta''. When a (nuclear-encoded) sigma factor is associated with the core the holoenzyme is formed, which can initiate transcription.

The protein localises to the plastid. The protein resides in the chloroplast. The catalysed reaction is RNA(n) + a ribonucleoside 5'-triphosphate = RNA(n+1) + diphosphate. Functionally, DNA-dependent RNA polymerase catalyzes the transcription of DNA into RNA using the four ribonucleoside triphosphates as substrates. This Psilotum nudum (Whisk fern) protein is DNA-directed RNA polymerase subunit beta''.